The sequence spans 251 residues: Core protein VP8 (251 aa).

Positions 1–32 (MSLLLENLIEEDTIFFAGSISEYDDLQMVIAG) are cleaved as a propeptide — removed by core protease OPG083/I7.

This sequence belongs to the orthopoxvirus OPG098 family. In terms of processing, undergoes morphogenesis-associated proteolysis which cleaves the 28 kDa to a 25-kDa product. Proteolytic cleavage of major core proteins P4a (OPG136/A10L), P4b (OPG129/A3L), and VP8 (OPG098/L4R), which occurs at a late stage of core formation, is required for production of infectious mature virions (MV).

Its subcellular location is the virion. The protein localises to the host cytoplasm. In terms of biological role, major core structural protein. The protein is Core protein VP8 (OPG098) of Vaccinia virus (strain Western Reserve) (VACV).